The primary structure comprises 109 residues: Nucleoid-associated protein PC1_1077 (109 aa).

This sequence belongs to the YbaB/EbfC family. Homodimer.

It localises to the cytoplasm. Its subcellular location is the nucleoid. In terms of biological role, binds to DNA and alters its conformation. May be involved in regulation of gene expression, nucleoid organization and DNA protection. This chain is Nucleoid-associated protein PC1_1077, found in Pectobacterium carotovorum subsp. carotovorum (strain PC1).